Here is a 224-residue protein sequence, read N- to C-terminus: UPF0319 protein VC_1853 (224 aa).

The signal sequence occupies residues 1 to 21 (MKLNPLILGLLLSFSAGHSLA).

Belongs to the UPF0319 family.

This chain is UPF0319 protein VC_1853, found in Vibrio cholerae serotype O1 (strain ATCC 39315 / El Tor Inaba N16961).